A 136-amino-acid polypeptide reads, in one-letter code: Small ribosomal subunit protein uS19 (136 aa).

This sequence belongs to the universal ribosomal protein uS19 family.

Its function is as follows. Protein S19 forms a complex with S13 that binds strongly to the 16S ribosomal RNA. This is Small ribosomal subunit protein uS19 from Methanothrix thermoacetophila (strain DSM 6194 / JCM 14653 / NBRC 101360 / PT) (Methanosaeta thermophila).